Consider the following 396-residue polypeptide: Probable arginine kinase F46H5.3 (396 aa).

In terms of domain architecture, Phosphagen kinase N-terminal spans 47 to 129 (KIEEGYAKLQ…FDPLIQDYHN (83 aa)). 102-106 (GVGVY) provides a ligand contact to substrate. Residues 159–396 (FINSTRIRCG…AHLIALEKAA (238 aa)) enclose the Phosphagen kinase C-terminal domain. Residues 162-166 (STRIR) and His-226 each bind ATP. Glu-266 contacts substrate. Arg-270 is a binding site for ATP. Cys-312 lines the substrate pocket. Residues 321-325 (RASVH), 349-354 (RGIHGE), and Asp-364 each bind ATP. Glu-354 serves as a coordination point for substrate.

This sequence belongs to the ATP:guanido phosphotransferase family.

It carries out the reaction L-arginine + ATP = N(omega)-phospho-L-arginine + ADP + H(+). The polypeptide is Probable arginine kinase F46H5.3 (Caenorhabditis elegans).